A 69-amino-acid chain; its full sequence is Beta-defensin 114 (69 aa).

Positions 1–26 (MRIFYYLHFLCYVTFILPATCTLVNA) are cleaved as a signal peptide. Disulfide bonds link Cys-29-Cys-57, Cys-36-Cys-50, and Cys-40-Cys-58.

Belongs to the beta-defensin family. In terms of tissue distribution, expressed in epididymis, predominantly in the caput (at protein level).

The protein resides in the secreted. Functionally, has a salt-sensitive antimicrobial activity against Gram-negative bacteria, including E.coli, Gram-positive, including S.aureus, and fungi, including C.albicans. Binds to and neutralizes bacterial lipopolysaccharides (LPS), abolishing TNF production by macrophages challenged with LPS. Rescues the LPS-induced reduction of sperm motility in vitro and may protect from LPS-induced lethality. This is Beta-defensin 114 (DEFB114) from Homo sapiens (Human).